Here is a 142-residue protein sequence, read N- to C-terminus: Large ribosomal subunit protein uL11 (142 aa).

The protein belongs to the universal ribosomal protein uL11 family. As to quaternary structure, part of the ribosomal stalk of the 50S ribosomal subunit. Interacts with L10 and the large rRNA to form the base of the stalk. L10 forms an elongated spine to which L12 dimers bind in a sequential fashion forming a multimeric L10(L12)X complex. One or more lysine residues are methylated.

Its function is as follows. Forms part of the ribosomal stalk which helps the ribosome interact with GTP-bound translation factors. In Vibrio cholerae serotype O1 (strain ATCC 39541 / Classical Ogawa 395 / O395), this protein is Large ribosomal subunit protein uL11.